The sequence spans 474 residues: mRNA cap guanine-N(7) methyltransferase (474 aa).

Residues 1–12 (MSTDSYTPSQEP) are compositionally biased toward polar residues. The interval 1 to 106 (MSTDSYTPSQ…GHEGDEGDED (106 aa)) is disordered. Residues 56 to 100 (SDIDGKYDKYGERRNAHTTTRDSRLDRLKRVRQKSAEREDVGHEG) show a composition bias toward basic and acidic residues. Residues 170–474 (SPIYKMRNFN…FYIGFVFEKV (305 aa)) enclose the mRNA cap 0 methyltransferase domain. 179-180 (NN) provides a ligand contact to mRNA. Residues Lys183, Cys207, Asp229, Asp269, Gln299, and Tyr304 each contribute to the S-adenosyl-L-methionine site.

Belongs to the class I-like SAM-binding methyltransferase superfamily. mRNA cap 0 methyltransferase family.

Its subcellular location is the nucleus. The catalysed reaction is a 5'-end (5'-triphosphoguanosine)-ribonucleoside in mRNA + S-adenosyl-L-methionine = a 5'-end (N(7)-methyl 5'-triphosphoguanosine)-ribonucleoside in mRNA + S-adenosyl-L-homocysteine. In terms of biological role, responsible for methylating the 5'-cap structure of mRNAs. The polypeptide is mRNA cap guanine-N(7) methyltransferase (ABD1) (Candida albicans (strain SC5314 / ATCC MYA-2876) (Yeast)).